Consider the following 155-residue polypeptide: Ribosome maturation factor RimP (155 aa).

This sequence belongs to the RimP family.

Its subcellular location is the cytoplasm. Required for maturation of 30S ribosomal subunits. The sequence is that of Ribosome maturation factor RimP from Prochlorococcus marinus subsp. pastoris (strain CCMP1986 / NIES-2087 / MED4).